The chain runs to 422 residues: Phospholipase D Z (422 aa).

The N-terminal stretch at 1–18 is a signal peptide; sequence MMMKLLFLIALFGCVVNS. N-linked (GlcNAc...) asparagine glycosylation is present at Asn-53. The 28-residue stretch at 148–175 folds into the PLD phosphodiesterase 1 domain; it reads GAGILHTKVIVVDQVSAYLGSANLDWRS. Catalysis depends on residues His-153, Lys-155, and Asp-160. 2 N-linked (GlcNAc...) asparagine glycosylation sites follow: Asn-225 and Asn-320. Residues 357-383 enclose the PLD phosphodiesterase 2 domain; that stretch reads FTRVNHAKYMVTDEQSYVGTSNWSEDY. Catalysis depends on residues His-362, Lys-364, and Asp-369. A glycan (N-linked (GlcNAc...) asparagine) is linked at Asn-378.

The protein belongs to the phospholipase D family.

The catalysed reaction is a 1,2-diacyl-sn-glycero-3-phosphocholine + H2O = a 1,2-diacyl-sn-glycero-3-phosphate + choline + H(+). Inhibited by butan-1-ol. Hydrolyzes membrane phospholipids, such as PtdCho (phosphatidylcholine), producing the free headgroup and PtdOH (phosphatidic acid; signaling molecule on its own). The sequence is that of Phospholipase D Z (pldZ) from Dictyostelium discoideum (Social amoeba).